We begin with the raw amino-acid sequence, 237 residues long: Ribosomal RNA small subunit methyltransferase G (237 aa).

S-adenosyl-L-methionine is bound by residues Gly-78, Phe-83, 129-130 (AE), and Arg-148.

Belongs to the methyltransferase superfamily. RNA methyltransferase RsmG family.

Its subcellular location is the cytoplasm. Functionally, specifically methylates the N7 position of a guanine in 16S rRNA. In Streptococcus pyogenes serotype M12 (strain MGAS9429), this protein is Ribosomal RNA small subunit methyltransferase G.